A 62-amino-acid chain; its full sequence is Photosystem II reaction center protein Z (62 aa).

The next 2 helical transmembrane spans lie at 8 to 28 (AVFALISTSLILLIGVPVVFA) and 41 to 61 (FSGTSLWIGLVFLVGILNSLI).

This sequence belongs to the PsbZ family. As to quaternary structure, PSII is composed of 1 copy each of membrane proteins PsbA, PsbB, PsbC, PsbD, PsbE, PsbF, PsbH, PsbI, PsbJ, PsbK, PsbL, PsbM, PsbT, PsbY, PsbZ, Psb30/Ycf12, at least 3 peripheral proteins of the oxygen-evolving complex and a large number of cofactors. It forms dimeric complexes.

The protein localises to the plastid. The protein resides in the chloroplast thylakoid membrane. In terms of biological role, may control the interaction of photosystem II (PSII) cores with the light-harvesting antenna, regulates electron flow through the 2 photosystem reaction centers. PSII is a light-driven water plastoquinone oxidoreductase, using light energy to abstract electrons from H(2)O, generating a proton gradient subsequently used for ATP formation. This Pelargonium hortorum (Common geranium) protein is Photosystem II reaction center protein Z.